A 176-amino-acid polypeptide reads, in one-letter code: ATP synthase subunit delta (176 aa).

The protein belongs to the ATPase delta chain family. In terms of assembly, F-type ATPases have 2 components, F(1) - the catalytic core - and F(0) - the membrane proton channel. F(1) has five subunits: alpha(3), beta(3), gamma(1), delta(1), epsilon(1). F(0) has three main subunits: a(1), b(2) and c(10-14). The alpha and beta chains form an alternating ring which encloses part of the gamma chain. F(1) is attached to F(0) by a central stalk formed by the gamma and epsilon chains, while a peripheral stalk is formed by the delta and b chains.

It is found in the cell inner membrane. Functionally, f(1)F(0) ATP synthase produces ATP from ADP in the presence of a proton or sodium gradient. F-type ATPases consist of two structural domains, F(1) containing the extramembraneous catalytic core and F(0) containing the membrane proton channel, linked together by a central stalk and a peripheral stalk. During catalysis, ATP synthesis in the catalytic domain of F(1) is coupled via a rotary mechanism of the central stalk subunits to proton translocation. This protein is part of the stalk that links CF(0) to CF(1). It either transmits conformational changes from CF(0) to CF(1) or is implicated in proton conduction. The chain is ATP synthase subunit delta from Wolinella succinogenes (strain ATCC 29543 / DSM 1740 / CCUG 13145 / JCM 31913 / LMG 7466 / NCTC 11488 / FDC 602W) (Vibrio succinogenes).